We begin with the raw amino-acid sequence, 436 residues long: GTPase Der (436 aa).

EngA-type G domains are found at residues 4–167 and 175–351; these read PTIA…PNEY and IKFS…ESQN. GTP is bound by residues 10-17, 57-61, 119-122, 181-188, 229-233, and 294-297; these read GRPNVGKS, DTGGI, NKVD, DTAGM, and NKWD. A KH-like domain is found at 352-436; it reads TRIPSAVLND…PIHLIARKRK (85 aa).

It belongs to the TRAFAC class TrmE-Era-EngA-EngB-Septin-like GTPase superfamily. EngA (Der) GTPase family. Associates with the 50S ribosomal subunit.

Functionally, GTPase that plays an essential role in the late steps of ribosome biogenesis. This chain is GTPase Der, found in Streptococcus pneumoniae (strain JJA).